The primary structure comprises 151 residues: Putative UPF0320 protein YFL063W (151 aa).

The protein belongs to the UPF0320 family.

The polypeptide is Putative UPF0320 protein YFL063W (Saccharomyces cerevisiae (strain ATCC 204508 / S288c) (Baker's yeast)).